A 248-amino-acid polypeptide reads, in one-letter code: 14-3-3 protein zeta (248 aa).

It belongs to the 14-3-3 family. As to quaternary structure, homodimer.

It is found in the cytoplasm. Its function is as follows. Adapter protein implicated in the regulation of a large spectrum of both general and specialized signaling pathways. Binds to a large number of partners, usually by recognition of a phosphoserine or phosphothreonine motif. Binding generally results in the modulation of the activity of the binding partner. The polypeptide is 14-3-3 protein zeta (14-3-3zeta) (Aedes aegypti (Yellowfever mosquito)).